A 54-amino-acid polypeptide reads, in one-letter code: FATVDCSDYPKPVCPLDYMPLCGSDSKTYSNKCNFCNAVVESSGTLTLRHFGKC.

One can recognise a Kazal-like domain in the interval 4-54 (VDCSDYPKPVCPLDYMPLCGSDSKTYSNKCNFCNAVVESSGTLTLRHFGKC). Intrachain disulfides connect Cys-6–Cys-36, Cys-14–Cys-33, and Cys-22–Cys-54.

In terms of processing, this is the only ovomucoid third domain known to be not glycosylated.

It localises to the secreted. The chain is Ovomucoid from Struthio camelus (Common ostrich).